The sequence spans 323 residues: Cobalamin biosynthesis protein CobD (323 aa).

Helical transmembrane passes span 52 to 72 (IAGVLLLALTVTSAASVTWLM), 73 to 93 (VWGSARLHALAGLMVAALLSS), 154 to 174 (DGIIAPLFWLALGGPVAGMAF), 214 to 234 (ALLMVMVAPLIGLSQANAASI), and 294 to 314 (IRLMYATTLAMAVISLATAAL).

The protein belongs to the CobD/CbiB family.

The protein localises to the cell membrane. It participates in cofactor biosynthesis; adenosylcobalamin biosynthesis. In terms of biological role, converts cobyric acid to cobinamide by the addition of aminopropanol on the F carboxylic group. This is Cobalamin biosynthesis protein CobD from Pelobacter propionicus (strain DSM 2379 / NBRC 103807 / OttBd1).